The sequence spans 366 residues: tRNA 2-selenouridine synthase (366 aa).

Residues 12–135 (FLNDVPMMDA…MRTFLLDTLH (124 aa)) enclose the Rhodanese domain. Cys95 functions as the S-selanylcysteine intermediate in the catalytic mechanism.

The protein belongs to the SelU family. Monomer.

It carries out the reaction 5-methylaminomethyl-2-thiouridine(34) in tRNA + selenophosphate + (2E)-geranyl diphosphate + H2O + H(+) = 5-methylaminomethyl-2-selenouridine(34) in tRNA + (2E)-thiogeraniol + phosphate + diphosphate. The enzyme catalyses 5-methylaminomethyl-2-thiouridine(34) in tRNA + (2E)-geranyl diphosphate = 5-methylaminomethyl-S-(2E)-geranyl-thiouridine(34) in tRNA + diphosphate. The catalysed reaction is 5-methylaminomethyl-S-(2E)-geranyl-thiouridine(34) in tRNA + selenophosphate + H(+) = 5-methylaminomethyl-2-(Se-phospho)selenouridine(34) in tRNA + (2E)-thiogeraniol. It catalyses the reaction 5-methylaminomethyl-2-(Se-phospho)selenouridine(34) in tRNA + H2O = 5-methylaminomethyl-2-selenouridine(34) in tRNA + phosphate. Functionally, involved in the post-transcriptional modification of the uridine at the wobble position (U34) of tRNA(Lys), tRNA(Glu) and tRNA(Gln). Catalyzes the conversion of 2-thiouridine (S2U-RNA) to 2-selenouridine (Se2U-RNA). Acts in a two-step process involving geranylation of 2-thiouridine (S2U) to S-geranyl-2-thiouridine (geS2U) and subsequent selenation of the latter derivative to 2-selenouridine (Se2U) in the tRNA chain. This is tRNA 2-selenouridine synthase from Pseudomonas syringae pv. tomato (strain ATCC BAA-871 / DC3000).